Here is a 162-residue protein sequence, read N- to C-terminus: UPF0114 protein PFLU_5318 (162 aa).

Helical transmembrane passes span 15–35 (LLAPIYFGLSLGLLALALKFF), 53–73 (LILVLLSLIDMALVGGLLVMV), and 136–156 (LMWYVIIHMTFVVSAFAMGYL).

It belongs to the UPF0114 family.

It localises to the cell membrane. In Pseudomonas fluorescens (strain SBW25), this protein is UPF0114 protein PFLU_5318.